Here is a 331-residue protein sequence, read N- to C-terminus: Myc-associated zinc finger protein (331 aa).

Disordered stretches follow at residues 46 to 65 (AQSP…APAA) and 108 to 131 (TVDT…SAPA). A compositionally biased stretch (pro residues) spans 117–127 (PPAPPPPPPAV). 4 consecutive C2H2-type zinc fingers follow at residues 177–199 (YICA…EAIH), 266–288 (HACE…KLSH), 294–316 (YQCP…VRSH), and 324–331 (YNCSHCGK).

Interacts with BPTF. As to expression, ubiquitously expressed.

The protein localises to the nucleus. Functionally, transcriptional regulator. Acts as a transcriptional activator that binds to purine-rich GAGA sites found in the promoter of many genes including insulin I and II and islet amyloid polypeptide. This Mesocricetus auratus (Golden hamster) protein is Myc-associated zinc finger protein (MAZ).